The primary structure comprises 209 residues: Iron-sulfur cluster assembly 2 homolog, mitochondrial (209 aa).

The N-terminal 27 residues, 1-27 (MIRSIFKKNSSLPYFLKRSFITKPHSI), are a transit peptide targeting the mitochondrion. 3 residues coordinate Fe cation: Cys-134, Cys-199, and Cys-201.

This sequence belongs to the HesB/IscA family. The cofactor is Fe cation.

It is found in the mitochondrion. Its function is as follows. Involved in the maturation of mitochondrial 4Fe-4S proteins functioning late in the iron-sulfur cluster assembly pathway. May be involved in the binding of an intermediate of Fe/S cluster assembly. The protein is Iron-sulfur cluster assembly 2 homolog, mitochondrial (isca2) of Dictyostelium discoideum (Social amoeba).